Reading from the N-terminus, the 217-residue chain is Ribosome maturation factor RimM (217 aa).

A PRC barrel domain is found at 115 to 186 (EDAWYDNQLV…TVTLTPPPGL (72 aa)). The segment at 181 to 217 (TPPPGLFEDLPDDAPAAGDESEPVSPPVTAEETPGGE) is disordered.

This sequence belongs to the RimM family. Binds ribosomal protein uS19.

It localises to the cytoplasm. Its function is as follows. An accessory protein needed during the final step in the assembly of 30S ribosomal subunit, possibly for assembly of the head region. Essential for efficient processing of 16S rRNA. May be needed both before and after RbfA during the maturation of 16S rRNA. It has affinity for free ribosomal 30S subunits but not for 70S ribosomes. This chain is Ribosome maturation factor RimM, found in Leifsonia xyli subsp. xyli (strain CTCB07).